The chain runs to 299 residues: MLFDQIASNKRKTWILLLVFFLLLALVGYAVGYLFIRSGLGGLVIALIIGFIYALSMIFQSTEIVMSMNGAREVDEQTAPDLYHVVEDMALVAQIPMPRIFIIDDPALNAFATGSNPQNAAVAATSGLLAIMNREELEAVMGHEVSHIRNYDIRISTIAVALASAITMLSSMAGRMMWWGGAGRRRSDDDRDGNGLEIIMLVVSLLAIVLAPLAATLVQLAISRQREFLADASSVELTRNPQGMINALDKLDNSKPMSRHVDDASSALYINDPKKGGGFQKLFYTHPPISERIERLKQM.

2 consecutive transmembrane segments (helical) span residues 15 to 35 (ILLL…GYLF) and 39 to 59 (GLGG…SMIF). His-143 is a Zn(2+) binding site. Glu-144 is an active-site residue. His-147 is a binding site for Zn(2+). The next 2 helical transmembrane spans lie at 158 to 178 (IAVA…RMMW) and 198 to 218 (IIML…ATLV). Glu-227 provides a ligand contact to Zn(2+).

Belongs to the peptidase M48B family. Requires Zn(2+) as cofactor.

The protein resides in the cell membrane. The polypeptide is Protease HtpX homolog (Streptococcus pneumoniae (strain Taiwan19F-14)).